A 538-amino-acid polypeptide reads, in one-letter code: Putative cysteine ligase BshC (538 aa).

Residues 462–533 (LDHLEKRLLK…DPLESNFKIL (72 aa)) are a coiled coil.

The protein belongs to the BshC family.

The protein is Putative cysteine ligase BshC of Christiangramia forsetii (strain DSM 17595 / CGMCC 1.15422 / KT0803) (Gramella forsetii).